The sequence spans 31 residues: Cytochrome b6-f complex subunit 6 (31 aa).

The helical transmembrane segment at 4-24 threads the bilayer; it reads ITSYFGFLLAALTITSALFIG.

Belongs to the PetL family. The 4 large subunits of the cytochrome b6-f complex are cytochrome b6, subunit IV (17 kDa polypeptide, PetD), cytochrome f and the Rieske protein, while the 4 small subunits are PetG, PetL, PetM and PetN. The complex functions as a dimer.

The protein localises to the plastid. It is found in the chloroplast thylakoid membrane. In terms of biological role, component of the cytochrome b6-f complex, which mediates electron transfer between photosystem II (PSII) and photosystem I (PSI), cyclic electron flow around PSI, and state transitions. PetL is important for photoautotrophic growth as well as for electron transfer efficiency and stability of the cytochrome b6-f complex. The chain is Cytochrome b6-f complex subunit 6 from Solanum tuberosum (Potato).